A 176-amino-acid chain; its full sequence is Ribosome maturation factor RimM (176 aa).

The PRC barrel domain maps to 104-176 (EDEYYFYEIL…KIIAKEMEWI (73 aa)).

It belongs to the RimM family. Binds ribosomal protein uS19.

It localises to the cytoplasm. Its function is as follows. An accessory protein needed during the final step in the assembly of 30S ribosomal subunit, possibly for assembly of the head region. Essential for efficient processing of 16S rRNA. May be needed both before and after RbfA during the maturation of 16S rRNA. It has affinity for free ribosomal 30S subunits but not for 70S ribosomes. In Thermotoga maritima (strain ATCC 43589 / DSM 3109 / JCM 10099 / NBRC 100826 / MSB8), this protein is Ribosome maturation factor RimM.